A 255-amino-acid chain; its full sequence is Probable iron chelatin transport ATP-binding protein HP_0888 (255 aa).

The ABC transporter domain maps to 3-240; the sequence is LEVKNLSFKY…HNLSALYDTP (238 aa). 35-42 is an ATP binding site; it reads APNGSGKT.

Belongs to the ABC transporter superfamily.

Its subcellular location is the cell inner membrane. Part of a binding-protein-dependent transport system for an iron chelatin. Probably responsible for energy coupling to the transport system (Potential). In Helicobacter pylori (strain ATCC 700392 / 26695) (Campylobacter pylori), this protein is Probable iron chelatin transport ATP-binding protein HP_0888.